The following is a 76-amino-acid chain: Esculentin-2MT1 (76 aa).

An N-terminal signal peptide occupies residues 1 to 22 (MFTMKKPLLLLFFLGTISLSLC). A propeptide spanning residues 23-37 (EEERNADEDDGEKEV) is cleaved from the precursor. Cys-70 and Cys-76 are oxidised to a cystine.

This sequence belongs to the frog skin active peptide (FSAP) family. Esculentin subfamily. As to expression, expressed by the skin glands.

The protein resides in the secreted. Antimicrobial peptide. This is Esculentin-2MT1 from Amolops mantzorum (Sichuan torrent frog).